The sequence spans 340 residues: UDP-N-acetylenolpyruvoylglucosamine reductase (340 aa).

The region spanning 14-185 (HVEATARWLL…VAVEFNLPLL (172 aa)) is the FAD-binding PCMH-type domain. Arginine 162 is an active-site residue. Serine 235 serves as the catalytic Proton donor. Glutamate 332 is a catalytic residue.

It belongs to the MurB family. Requires FAD as cofactor.

Its subcellular location is the cytoplasm. It carries out the reaction UDP-N-acetyl-alpha-D-muramate + NADP(+) = UDP-N-acetyl-3-O-(1-carboxyvinyl)-alpha-D-glucosamine + NADPH + H(+). The protein operates within cell wall biogenesis; peptidoglycan biosynthesis. In terms of biological role, cell wall formation. This chain is UDP-N-acetylenolpyruvoylglucosamine reductase, found in Xanthomonas oryzae pv. oryzae (strain KACC10331 / KXO85).